Consider the following 412-residue polypeptide: Hyaluronidase-3 (412 aa).

Residues 1–22 (MIMHLGLMMVVGLTLCLMHGQA) form the signal peptide. 5 disulfide bridges follow: cysteine 42–cysteine 332, cysteine 206–cysteine 221, cysteine 357–cysteine 368, cysteine 362–cysteine 396, and cysteine 398–cysteine 407. N-linked (GlcNAc...) asparagine glycosylation occurs at asparagine 69. Residue glutamate 129 is the Proton donor of the active site. N-linked (GlcNAc...) asparagine glycosylation is present at asparagine 216. An EGF-like domain is found at 353–408 (AAMACSHQRCHGHGRCARKDPGQMEAFLHLQPDDSLGAWNSFRCHCYSGWAGPTCL).

Belongs to the glycosyl hydrolase 56 family. N-glycosylated. As to expression, expressed in testis, epididymal tissue, epididymal luminal fluid (ELF), acrosome-intact (AI) sperm and caput (CAP), corpus (COR) and caudal (CAU) sperm. Higher expression in sperm than testis (at protein level). Liver, kidney, skin, brain, stomach and testis. Expressed mainly in granulosa cells of the ovaries. Expressed in small and large antral follicles. Not present in theca or stroma cells. Expressed in testis and liver. Expressed in testis and CAP, COR, and CAU epididymis tissue.

Its subcellular location is the secreted. The protein resides in the cell membrane. It localises to the cytoplasmic vesicle. The protein localises to the secretory vesicle. It is found in the acrosome. Its subcellular location is the endoplasmic reticulum. The protein resides in the early endosome. The enzyme catalyses Random hydrolysis of (1-&gt;4)-linkages between N-acetyl-beta-D-glucosamine and D-glucuronate residues in hyaluronate.. Functionally, facilitates sperm penetration into the layer of cumulus cells surrounding the egg by digesting hyaluronic acid. Involved in induction of the acrosome reaction in the sperm. Involved in follicular atresia, the breakdown of immature ovarian follicles that are not selected to ovulate. Induces ovarian granulosa cell apoptosis, possibly via apoptotic signaling pathway involving CASP8 and CASP3 activation, and poly(ADP-ribose) polymerase (PARP) cleavage. Has no hyaluronidase activity in embryonic fibroblasts in vitro. Has no hyaluronidase activity in granulosa cells in vitro. The chain is Hyaluronidase-3 (Hyal3) from Mus musculus (Mouse).